Reading from the N-terminus, the 303-residue chain is Secreted mono- and diacylglycerol lipase LIP4 (303 aa).

Residues 1–16 form the signal peptide; it reads MHFLAFLLCLIPLALC. Residues cysteine 54 and cysteine 293 are joined by a disulfide bond. Serine 167 functions as the Nucleophile in the catalytic mechanism. Aspartate 224 is an active-site residue.

This sequence belongs to the AB hydrolase superfamily. Lipase family. Class 3 subfamily.

It localises to the secreted. It catalyses the reaction a monoacylglycerol + H2O = glycerol + a fatty acid + H(+). The catalysed reaction is a diacylglycerol + H2O = a monoacylglycerol + a fatty acid + H(+). Secreted lipase involved in Dandruff and seborrheic dermatitis (D/SD) probably via lipase-mediated breakdown of sebaceous lipids and release of irritating free fatty acids. Shows activity against monoglyceride and diglyceride substrates. Due to an absence of fatty acid synthase genes in Malassezia species, secretory lipases are essential for the yeast to generate free fatty acids from degradation of sebum and assimilate them as lipid sources for growth. Plays an essential role at the pathogen-host interface during disease progression. This Malassezia restricta (strain ATCC 96810 / NBRC 103918 / CBS 7877) (Seborrheic dermatitis infection agent) protein is Secreted mono- and diacylglycerol lipase LIP4.